Here is a 76-residue protein sequence, read N- to C-terminus: Acyl carrier protein (76 aa).

Residues 1-75 (MVLEKIKTLM…DVVLYIEKNL (75 aa)) form the Carrier domain. Serine 35 carries the O-(pantetheine 4'-phosphoryl)serine modification.

This sequence belongs to the acyl carrier protein (ACP) family. 4'-phosphopantetheine is transferred from CoA to a specific serine of apo-ACP by AcpS. This modification is essential for activity because fatty acids are bound in thioester linkage to the sulfhydryl of the prosthetic group.

It localises to the cytoplasm. Its pathway is lipid metabolism; fatty acid biosynthesis. Carrier of the growing fatty acid chain in fatty acid biosynthesis. The chain is Acyl carrier protein from Phytoplasma australiense.